Reading from the N-terminus, the 563-residue chain is MTVQEFDVVVVGSGAAGMVAALVAAHRGLSTVVVEKAPHYGGSTARSGGGVWIPNNEVLKRRGVRDTPEAARTYLHGIVGEIVEPERIDAYLDRGPEMLSFVLKHTPLKMCWVPGYSDYYPEAPGGRPGGRSIEPKPFNARKLGADMAGLEPAYGKVPLNVVVMQQDYVRLNQLKRHPRGVLRSMKVGARTMWAKATGKNLVGMGRALIGPLRIGLQRAGVPVELNTAFTDLFVENGVVSGVYVRDSHEAESAEPQLIRARRGVILACGGFEHNEQMRIKYQRAPITTEWTVGASANTGDGILAAEKLGAALDLMDDAWWGPTVPLVGKPWFALSERNSPGSIIVNMSGKRFMNESMPYVEACHHMYGGEHGQGPGPGENIPAWLVFDQRYRDRYIFAGLQPGQRIPSRWLDSGVIVQADTLAELAGKAGLPADELTATVQRFNAFARSGVDEDYHRGESAYDRYYGDPSNKPNPNLGEVGHPPYYGAKMVPGDLGTKGGIRTDVNGRALRDDGSIIDGLYAAGNVSAPVMGHTYPGPGGTIGPAMTFGYLAALHIADQAGKR.

Residue 7–36 (DVVVVGSGAAGMVAALVAAHRGLSTVVVEK) coordinates FAD.

The protein belongs to the FAD-dependent oxidoreductase 2 family. 3-oxosteroid dehydrogenase subfamily. It depends on FAD as a cofactor.

It catalyses the reaction a 3-oxosteroid + A = a 3-oxo-Delta(1)-steroid + AH2. The catalysed reaction is a 3-oxo-Delta(4)-steroid + A = a 3-oxo-Delta(1,4)-steroid + AH2. The enzyme catalyses 3-oxochol-4-en-22-oyl-CoA + NAD(+) = 3-oxochola-1,4-dien-22-oyl-CoA + NADH + H(+). In terms of biological role, involved in the degradation of cholesterol. Catalyzes the elimination of the C-1 and C-2 hydrogen atoms of the A-ring from the polycyclic ring structure of 3-ketosteroids. Has a clear preference for 3-ketosteroids with a saturated A-ring, displaying highest activity on 5alpha-AD (5alpha-androstane-3,17-dione) and 5alpha-T (5alpha-testosterone, also known as 17beta-hydroxy-5alpha-androstane-3-one). Is also involved in the formation of 3-keto-1,4-diene-steroid from 3-keto-4-ene-steroid. Catalyzes the conversion of 3-oxo-23,24-bisnorchol-4-en-22-oyl-coenzyme A thioester (4-BNC-CoA) to 3-oxo-23,24-bisnorchola-1,4-dien-22-oyl-coenzyme A thioester (1,4-BNC-CoA). This Mycobacterium tuberculosis (strain ATCC 25618 / H37Rv) protein is 3-oxosteroid 1-dehydrogenase (kstD).